The following is a 93-amino-acid chain: Alpha-defensin 7 (93 aa).

Residues 1 to 19 (MKTLILLSALVLLAFQVQA) form the signal peptide. The propeptide occupies 20 to 58 (DPIQNTDEETKTEEQPGEDDQAVSVSFGDPEGSSLQEES). A disordered region spans residues 22–56 (IQNTDEETKTEEQPGEDDQAVSVSFGDPEGSSLQE). 3 cysteine pairs are disulfide-bonded: cysteine 64–cysteine 92, cysteine 66–cysteine 81, and cysteine 71–cysteine 91.

This sequence belongs to the alpha-defensin family. Paneth cells of the small bowel.

It is found in the secreted. Functionally, probably contributes to the antimicrobial barrier function of the small bowel mucosa. The protein is Alpha-defensin 7 (Defa7) of Mus musculus (Mouse).